A 278-amino-acid polypeptide reads, in one-letter code: Tryptophan synthase alpha chain (278 aa).

Residues glutamate 50 and aspartate 61 each act as proton acceptor in the active site.

It belongs to the TrpA family. As to quaternary structure, tetramer of two alpha and two beta chains.

The enzyme catalyses (1S,2R)-1-C-(indol-3-yl)glycerol 3-phosphate + L-serine = D-glyceraldehyde 3-phosphate + L-tryptophan + H2O. Its pathway is amino-acid biosynthesis; L-tryptophan biosynthesis; L-tryptophan from chorismate: step 5/5. The alpha subunit is responsible for the aldol cleavage of indoleglycerol phosphate to indole and glyceraldehyde 3-phosphate. The chain is Tryptophan synthase alpha chain from Methylorubrum populi (strain ATCC BAA-705 / NCIMB 13946 / BJ001) (Methylobacterium populi).